A 340-amino-acid polypeptide reads, in one-letter code: Alcohol dehydrogenase patD (340 aa).

Cys46 provides a ligand contact to Zn(2+). Residue His47 coordinates NAD(+). The Zn(2+) site is built by His67, Glu68, Cys101, Cys104, Cys112, and Cys154. His67 lines the substrate pocket. Residues 178–183, 198–203, Lys206, 265–267, 289–291, and 297–299 contribute to the NAD(+) site; these read GLGGLG, VALSRD, LSI, PSG, and EDA.

This sequence belongs to the zinc-containing alcohol dehydrogenase family. Requires Zn(2+) as cofactor.

The protein localises to the cytoplasm. The protein resides in the cytosol. It carries out the reaction neopatulin + NADPH + H(+) = (E)-ascladiol + NADP(+). Its pathway is mycotoxin biosynthesis; patulin biosynthesis. Functionally, alcohol dehydrogenase; part of the gene cluster that mediates the biosynthesis of patulin, an acetate-derived tetraketide mycotoxin produced by several fungal species that shows antimicrobial properties against several bacteria. PatD catalyzes the conversion of neopatulin into E-ascladiol. The pathway begins with the synthesis of 6-methylsalicylic acid by the polyketide synthase (PKS) patK via condensation of acetate and malonate units. The 6-methylsalicylic acid decarboxylase patG then catalyzes the decarboxylation of 6-methylsalicylic acid to yield m-cresol (also known as 3-methylphenol). These first reactions occur in the cytosol. The intermediate m-cresol is then transported into the endoplasmic reticulum where the cytochrome P450 monooxygenase patH converts it to m-hydroxybenzyl alcohol, which is further converted to gentisyl alcohol by the cytochrome P450 monooxygenase patI. The oxidoreductases patJ and patO further convert gentisyl alcohol to isoepoxydon in the vacuole. PatN catalyzes then the transformation of isoepoxydon into phyllostine. The cluster protein patF is responsible for the conversion from phyllostine to neopatulin whereas the alcohol dehydrogenase patD converts neopatulin to E-ascladiol. The steps between isoepoxydon and E-ascladiol occur in the cytosol, and E-ascladiol is probably secreted to the extracellular space by one of the cluster-specific transporters patC or patM. Finally, the secreted patulin synthase patE catalyzes the conversion of E-ascladiol to patulin. The polypeptide is Alcohol dehydrogenase patD (Penicillium expansum (Blue mold rot fungus)).